The chain runs to 1434 residues: Gag-Pol polyprotein (1434 aa).

A lipid anchor (N-myristoyl glycine; by host) is attached at glycine 2. Positions 7 to 31 are interaction with Gp41; that stretch reads VLSGGKLDAWEKIRLRPGGKKKYRL. An interaction with host CALM1 region spans residues 8–43; sequence LSGGKLDAWEKIRLRPGGKKKYRLKHIVWASRELKR. Residues 12-19 form an interaction with host AP3D1 region; sequence KLDAWEKI. Residues 14 to 33 are interaction with membrane phosphatidylinositol 4,5-bisphosphate and RNA; that stretch reads DAWEKIRLRPGGKKKYRLKH. The short motif at 16–22 is the Nuclear export signal element; sequence WEKIRLR. The Nuclear localization signal motif lies at 26–32; sequence KKKYRLK. Positions 73–77 are interaction with membrane phosphatidylinositol 4,5-bisphosphate; the sequence is EELKS. The span at 103–112 shows a compositional bias: basic and acidic residues; it reads KLQEEQDKHQ. The interval 103 to 124 is disordered; the sequence is KLQEEQDKHQQKTQQATADKGV. The residue at position 132 (tyrosine 132) is a Phosphotyrosine; by host. Positions 189–227 are interaction with human PPIA/CYPA and NUP153; sequence NTVGGHQAAMQMLKDTINEEAAEWDRLHPVHAGPIPPGQ. The dimerization/Multimerization of capsid protein p24 stretch occupies residues 277 to 363; that stretch reads YSPVSILDIK…GGPSHKARIL (87 aa). 2 CCHC-type zinc fingers span residues 389-406 and 410-427; these read VKCF…NCRA and RGCW…DCTE. Residues 443–483 are disordered; the sequence is EARKFSSEQTRANSPASRELRVRGGDSSLPEAGAERQGTGS. The segment covering 449 to 458 has biased composition (polar residues); it reads SEQTRANSPA. The segment at 488-492 is dimerization of protease; it reads PQITL. One can recognise a Peptidase A2 domain in the interval 507-576; that stretch reads REALLDTGAD…TPVNIIGRNM (70 aa). The For protease activity; shared with dimeric partner role is filled by aspartate 512. Dimerization of protease stretches follow at residues 536–542 and 575–587; these read GIGGFIK and NMLT…LNFP. Residues 630–820 enclose the Reverse transcriptase domain; the sequence is EGKISKIGPE…PPFLWMGYEL (191 aa). 3 residues coordinate Mg(2+): aspartate 696, aspartate 771, and aspartate 772. Residues 813–821 are RT 'primer grip'; sequence FLWMGYELH. Positions 984 to 1000 match the Tryptophan repeat motif motif; it reads WEIWWTEYWQATWIPEW. An RNase H type-1 domain is found at 1020 to 1143; it reads IIGAETFYVD…VDKLVSTGIR (124 aa). Residues aspartate 1029, glutamate 1064, aspartate 1084, and aspartate 1135 each coordinate Mg(2+). The Integrase-type zinc-finger motif lies at 1149 to 1190; the sequence is DGIDKAQEEHEKYHSNWRAMASDFNLPPVVAKEIVASCDKCQ. The Zn(2+) site is built by histidine 1158, histidine 1162, cysteine 1186, and cysteine 1189. An Integrase catalytic domain is found at 1200–1350; the sequence is VDCSPGIWQL…SAGERIIDII (151 aa). Positions 1210, 1262, and 1298 each coordinate Mg(2+). The segment at residues 1369 to 1416 is a DNA-binding region (integrase-type); that stretch reads FRVYFRDSRDPVWKGPAKLLWKGEGAVVIQDNNEIKVIPRRKAKIIRD.

Homotrimer; further assembles as hexamers of trimers. Interacts with gp41 (via C-terminus). Interacts with host CALM1; this interaction induces a conformational change in the Matrix protein, triggering exposure of the myristate group. Interacts with host AP3D1; this interaction allows the polyprotein trafficking to multivesicular bodies during virus assembly. Part of the pre-integration complex (PIC) which is composed of viral genome, matrix protein, Vpr and integrase. In terms of assembly, homodimer; the homodimer further multimerizes as homohexamers or homopentamers. Interacts with human PPIA/CYPA; This interaction stabilizes the capsid. Interacts with human NUP153. Interacts with host PDZD8; this interaction stabilizes the capsid. Interacts with monkey TRIM5; this interaction destabilizes the capsid. As to quaternary structure, homodimer, whose active site consists of two apposed aspartic acid residues. Heterodimer of p66 RT and p51 RT (RT p66/p51). Heterodimerization of RT is essential for DNA polymerase activity. The overall folding of the subdomains is similar in p66 RT and p51 RT but the spatial arrangements of the subdomains are dramatically different. In terms of assembly, homotetramer; may further associate as a homohexadecamer. Part of the pre-integration complex (PIC) which is composed of viral genome, matrix protein, Vpr and integrase. Interacts with human SMARCB1/INI1 and human PSIP1/LEDGF isoform 1. Interacts with human KPNA3; this interaction might play a role in nuclear import of the pre-integration complex. Interacts with human NUP153; this interaction might play a role in nuclear import of the pre-integration complex. Mg(2+) serves as cofactor. Specific enzymatic cleavages by the viral protease yield mature proteins. The protease is released by autocatalytic cleavage. The polyprotein is cleaved during and after budding, this process is termed maturation. Proteolytic cleavage of p66 RT removes the RNase H domain to yield the p51 RT subunit. Nucleocapsid protein p7 might be further cleaved after virus entry. In terms of processing, tyrosine phosphorylated presumably in the virion by a host kinase. Phosphorylation is apparently not a major regulator of membrane association. Post-translationally, phosphorylated possibly by host MAPK1; this phosphorylation is necessary for Pin1-mediated virion uncoating. Methylated by host PRMT6, impairing its function by reducing RNA annealing and the initiation of reverse transcription.

It localises to the host cell membrane. Its subcellular location is the host endosome. The protein resides in the host multivesicular body. It is found in the virion membrane. The protein localises to the host nucleus. It localises to the host cytoplasm. Its subcellular location is the virion. It carries out the reaction Specific for a P1 residue that is hydrophobic, and P1' variable, but often Pro.. It catalyses the reaction Endohydrolysis of RNA in RNA/DNA hybrids. Three different cleavage modes: 1. sequence-specific internal cleavage of RNA. Human immunodeficiency virus type 1 and Moloney murine leukemia virus enzymes prefer to cleave the RNA strand one nucleotide away from the RNA-DNA junction. 2. RNA 5'-end directed cleavage 13-19 nucleotides from the RNA end. 3. DNA 3'-end directed cleavage 15-20 nucleotides away from the primer terminus.. The enzyme catalyses 3'-end directed exonucleolytic cleavage of viral RNA-DNA hybrid.. The catalysed reaction is DNA(n) + a 2'-deoxyribonucleoside 5'-triphosphate = DNA(n+1) + diphosphate. With respect to regulation, protease: The viral protease is inhibited by many synthetic protease inhibitors (PIs), such as amprenavir, atazanavir, indinavir, loprinavir, nelfinavir, ritonavir and saquinavir. Use of protease inhibitors in tritherapy regimens permit more ambitious therapeutic strategies. Reverse transcriptase/ribonuclease H: RT can be inhibited either by nucleoside RT inhibitors (NRTIs) or by non nucleoside RT inhibitors (NNRTIs). NRTIs act as chain terminators, whereas NNRTIs inhibit DNA polymerization by binding a small hydrophobic pocket near the RT active site and inducing an allosteric change in this region. Classical NRTIs are abacavir, adefovir (PMEA), didanosine (ddI), lamivudine (3TC), stavudine (d4T), tenofovir (PMPA), zalcitabine (ddC), and zidovudine (AZT). Classical NNRTIs are atevirdine (BHAP U-87201E), delavirdine, efavirenz (DMP-266), emivirine (I-EBU), and nevirapine (BI-RG-587). The tritherapies used as a basic effective treatment of AIDS associate two NRTIs and one NNRTI. Mediates, with Gag polyprotein, the essential events in virion assembly, including binding the plasma membrane, making the protein-protein interactions necessary to create spherical particles, recruiting the viral Env proteins, and packaging the genomic RNA via direct interactions with the RNA packaging sequence (Psi). Gag-Pol polyprotein may regulate its own translation, by the binding genomic RNA in the 5'-UTR. At low concentration, the polyprotein would promote translation, whereas at high concentration, the polyprotein would encapsidate genomic RNA and then shut off translation. Functionally, targets the polyprotein to the plasma membrane via a multipartite membrane-binding signal, that includes its myristoylated N-terminus. Matrix protein is part of the pre-integration complex. Implicated in the release from host cell mediated by Vpu. Binds to RNA. In terms of biological role, forms the conical core that encapsulates the genomic RNA-nucleocapsid complex in the virion. Most core are conical, with only 7% tubular. The core is constituted by capsid protein hexamer subunits. The core is disassembled soon after virion entry. Host restriction factors such as TRIM5-alpha or TRIMCyp bind retroviral capsids and cause premature capsid disassembly, leading to blocks in reverse transcription. Capsid restriction by TRIM5 is one of the factors which restricts HIV-1 to the human species. Host PIN1 apparently facilitates the virion uncoating. On the other hand, interactions with PDZD8 or CYPA stabilize the capsid. Its function is as follows. Encapsulates and protects viral dimeric unspliced genomic RNA (gRNA). Binds these RNAs through its zinc fingers. Acts as a nucleic acid chaperone which is involved in rearangement of nucleic acid secondary structure during gRNA retrotranscription. Also facilitates template switch leading to recombination. As part of the polyprotein, participates in gRNA dimerization, packaging, tRNA incorporation and virion assembly. Aspartyl protease that mediates proteolytic cleavages of Gag and Gag-Pol polyproteins during or shortly after the release of the virion from the plasma membrane. Cleavages take place as an ordered, step-wise cascade to yield mature proteins. This process is called maturation. Displays maximal activity during the budding process just prior to particle release from the cell. Also cleaves Nef and Vif, probably concomitantly with viral structural proteins on maturation of virus particles. Hydrolyzes host EIF4GI and PABP1 in order to shut off the capped cellular mRNA translation. The resulting inhibition of cellular protein synthesis serves to ensure maximal viral gene expression and to evade host immune response. Also mediates cleavage of host YTHDF3. Mediates cleavage of host CARD8, thereby activating the CARD8 inflammasome, leading to the clearance of latent HIV-1 in patient CD4(+) T-cells after viral reactivation; in contrast, HIV-1 can evade CARD8-sensing when its protease remains inactive in infected cells prior to viral budding. Functionally, multifunctional enzyme that converts the viral RNA genome into dsDNA in the cytoplasm, shortly after virus entry into the cell. This enzyme displays a DNA polymerase activity that can copy either DNA or RNA templates, and a ribonuclease H (RNase H) activity that cleaves the RNA strand of RNA-DNA heteroduplexes in a partially processive 3' to 5' endonucleasic mode. Conversion of viral genomic RNA into dsDNA requires many steps. A tRNA(3)-Lys binds to the primer-binding site (PBS) situated at the 5'-end of the viral RNA. RT uses the 3' end of the tRNA primer to perform a short round of RNA-dependent minus-strand DNA synthesis. The reading proceeds through the U5 region and ends after the repeated (R) region which is present at both ends of viral RNA. The portion of the RNA-DNA heteroduplex is digested by the RNase H, resulting in a ssDNA product attached to the tRNA primer. This ssDNA/tRNA hybridizes with the identical R region situated at the 3' end of viral RNA. This template exchange, known as minus-strand DNA strong stop transfer, can be either intra- or intermolecular. RT uses the 3' end of this newly synthesized short ssDNA to perform the RNA-dependent minus-strand DNA synthesis of the whole template. RNase H digests the RNA template except for two polypurine tracts (PPTs) situated at the 5'-end and near the center of the genome. It is not clear if both polymerase and RNase H activities are simultaneous. RNase H probably can proceed both in a polymerase-dependent (RNA cut into small fragments by the same RT performing DNA synthesis) and a polymerase-independent mode (cleavage of remaining RNA fragments by free RTs). Secondly, RT performs DNA-directed plus-strand DNA synthesis using the PPTs that have not been removed by RNase H as primers. PPTs and tRNA primers are then removed by RNase H. The 3' and 5' ssDNA PBS regions hybridize to form a circular dsDNA intermediate. Strand displacement synthesis by RT to the PBS and PPT ends produces a blunt ended, linear dsDNA copy of the viral genome that includes long terminal repeats (LTRs) at both ends. In terms of biological role, catalyzes viral DNA integration into the host chromosome, by performing a series of DNA cutting and joining reactions. This enzyme activity takes place after virion entry into a cell and reverse transcription of the RNA genome in dsDNA. The first step in the integration process is 3' processing. This step requires a complex comprising the viral genome, matrix protein, Vpr and integrase. This complex is called the pre-integration complex (PIC). The integrase protein removes 2 nucleotides from each 3' end of the viral DNA, leaving recessed CA OH's at the 3' ends. In the second step, the PIC enters cell nucleus. This process is mediated through integrase and Vpr proteins, and allows the virus to infect a non dividing cell. This ability to enter the nucleus is specific of lentiviruses, other retroviruses cannot and rely on cell division to access cell chromosomes. In the third step, termed strand transfer, the integrase protein joins the previously processed 3' ends to the 5' ends of strands of target cellular DNA at the site of integration. The 5'-ends are produced by integrase-catalyzed staggered cuts, 5 bp apart. A Y-shaped, gapped, recombination intermediate results, with the 5'-ends of the viral DNA strands and the 3' ends of target DNA strands remaining unjoined, flanking a gap of 5 bp. The last step is viral DNA integration into host chromosome. This involves host DNA repair synthesis in which the 5 bp gaps between the unjoined strands are filled in and then ligated. Since this process occurs at both cuts flanking the HIV genome, a 5 bp duplication of host DNA is produced at the ends of HIV-1 integration. Alternatively, Integrase may catalyze the excision of viral DNA just after strand transfer, this is termed disintegration. This chain is Gag-Pol polyprotein (gag-pol), found in Homo sapiens (Human).